The sequence spans 419 residues: 1,4-beta-D-glucan cellobiohydrolase CEL6B (419 aa).

The signal sequence occupies residues 1 to 47 (MGESFLLLQPASPALSPTPSSLLLGPTITMRADVLIAALATGALVAA). The substrate site is built by W111 and S113. Residues D152 and D199 each act as proton donor in the active site. Residue W247 participates in substrate binding. The N-linked (GlcNAc...) asparagine glycan is linked to N284. N287 serves as a coordination point for substrate. Residue N298 is glycosylated (N-linked (GlcNAc...) asparagine). W347 provides a ligand contact to substrate. N364 carries N-linked (GlcNAc...) asparagine glycosylation. Substrate-binding residues include K375 and E379.

This sequence belongs to the glycosyl hydrolase 6 (cellulase B) family. In terms of processing, both N- and O-glycosylated.

The protein resides in the secreted. The enzyme catalyses Hydrolysis of (1-&gt;4)-beta-D-glucosidic linkages in cellulose and cellotetraose, releasing cellobiose from the non-reducing ends of the chains.. Exoglucanase that plays an important function in biomass degradation by catalyzing the hydrolysis of the non-reducing end beta-1,4-glucosidic linkages in cellulose and cellotetraose to release cellobiose. Hydrolyzes crystalline and amorphous cellulose but is inactive on hydroxyethyl cellulose, mannan, galactomannan, xyloglucan, arabinoxylan, arabinan, xylan, and pectin. The chain is 1,4-beta-D-glucan cellobiohydrolase CEL6B from Podospora anserina (strain S / ATCC MYA-4624 / DSM 980 / FGSC 10383) (Pleurage anserina).